The chain runs to 122 residues: Large ribosomal subunit protein uL14 (122 aa).

Belongs to the universal ribosomal protein uL14 family. In terms of assembly, part of the 50S ribosomal subunit. Forms a cluster with proteins L3 and L19. In the 70S ribosome, L14 and L19 interact and together make contacts with the 16S rRNA in bridges B5 and B8.

Functionally, binds to 23S rRNA. Forms part of two intersubunit bridges in the 70S ribosome. This is Large ribosomal subunit protein uL14 from Clostridium botulinum (strain 657 / Type Ba4).